The following is a 705-amino-acid chain: Ribosomal RNA large subunit methyltransferase K/L (705 aa).

Residues 43-154 enclose the THUMP domain; it reads LLYQSLLWSR…RDTASVALDL (112 aa).

It belongs to the methyltransferase superfamily. RlmKL family.

The protein localises to the cytoplasm. It carries out the reaction guanosine(2445) in 23S rRNA + S-adenosyl-L-methionine = N(2)-methylguanosine(2445) in 23S rRNA + S-adenosyl-L-homocysteine + H(+). The enzyme catalyses guanosine(2069) in 23S rRNA + S-adenosyl-L-methionine = N(2)-methylguanosine(2069) in 23S rRNA + S-adenosyl-L-homocysteine + H(+). In terms of biological role, specifically methylates the guanine in position 2445 (m2G2445) and the guanine in position 2069 (m7G2069) of 23S rRNA. This is Ribosomal RNA large subunit methyltransferase K/L from Pectobacterium atrosepticum (strain SCRI 1043 / ATCC BAA-672) (Erwinia carotovora subsp. atroseptica).